Reading from the N-terminus, the 451-residue chain is tRNA-2-methylthio-N(6)-dimethylallyladenosine synthase (451 aa).

The MTTase N-terminal domain maps to 18–134; the sequence is ARVYLETYGC…LPNLLDLAES (117 aa). The [4Fe-4S] cluster site is built by cysteine 27, cysteine 63, cysteine 97, cysteine 170, cysteine 174, and cysteine 177. One can recognise a Radical SAM core domain in the interval 156–386; that stretch reads RKNGHSAFLA…IALQQKISAE (231 aa). In terms of domain architecture, TRAM spans 389-451; that stretch reads RNDIGNTHEV…TSATLIGNAL (63 aa).

It belongs to the methylthiotransferase family. MiaB subfamily. As to quaternary structure, monomer. It depends on [4Fe-4S] cluster as a cofactor.

The protein localises to the cytoplasm. The catalysed reaction is N(6)-dimethylallyladenosine(37) in tRNA + (sulfur carrier)-SH + AH2 + 2 S-adenosyl-L-methionine = 2-methylsulfanyl-N(6)-dimethylallyladenosine(37) in tRNA + (sulfur carrier)-H + 5'-deoxyadenosine + L-methionine + A + S-adenosyl-L-homocysteine + 2 H(+). Its function is as follows. Catalyzes the methylthiolation of N6-(dimethylallyl)adenosine (i(6)A), leading to the formation of 2-methylthio-N6-(dimethylallyl)adenosine (ms(2)i(6)A) at position 37 in tRNAs that read codons beginning with uridine. In Chloroherpeton thalassium (strain ATCC 35110 / GB-78), this protein is tRNA-2-methylthio-N(6)-dimethylallyladenosine synthase.